Consider the following 366-residue polypeptide: tRNA/tmRNA (uracil-C(5))-methyltransferase (366 aa).

S-adenosyl-L-methionine contacts are provided by glutamine 190, tyrosine 218, asparagine 223, glutamate 239, and aspartate 299. Cysteine 324 serves as the catalytic Nucleophile. Residue glutamate 358 is the Proton acceptor of the active site.

The protein belongs to the class I-like SAM-binding methyltransferase superfamily. RNA M5U methyltransferase family. TrmA subfamily.

The enzyme catalyses uridine(54) in tRNA + S-adenosyl-L-methionine = 5-methyluridine(54) in tRNA + S-adenosyl-L-homocysteine + H(+). The catalysed reaction is uridine(341) in tmRNA + S-adenosyl-L-methionine = 5-methyluridine(341) in tmRNA + S-adenosyl-L-homocysteine + H(+). Its function is as follows. Dual-specificity methyltransferase that catalyzes the formation of 5-methyluridine at position 54 (m5U54) in all tRNAs, and that of position 341 (m5U341) in tmRNA (transfer-mRNA). The sequence is that of tRNA/tmRNA (uracil-C(5))-methyltransferase from Citrobacter koseri (strain ATCC BAA-895 / CDC 4225-83 / SGSC4696).